Here is a 427-residue protein sequence, read N- to C-terminus: mRNA cap guanine-N(7) methyltransferase (427 aa).

Positions 1 to 79 are disordered; that stretch reads MSLNYEQNAA…EPETEAASGA (79 aa). A phosphoserine mark is found at Ser22, Ser24, Ser29, Ser46, and Ser48. Basic and acidic residues predominate over residues 44–57; the sequence is HVSKSPREYYDEPG. The region spanning 103-411 is the mRNA cap 0 methyltransferase domain; it reads SKIFFMRNFN…LYLVCAFKKC (309 aa). 112–113 is a binding site for mRNA; the sequence is NN. Residues Lys116, Cys143, Asp165, Asp202, Gln225, and Tyr230 each coordinate S-adenosyl-L-methionine.

It belongs to the class I-like SAM-binding methyltransferase superfamily. mRNA cap 0 methyltransferase family.

It localises to the nucleus. The enzyme catalyses a 5'-end (5'-triphosphoguanosine)-ribonucleoside in mRNA + S-adenosyl-L-methionine = a 5'-end (N(7)-methyl 5'-triphosphoguanosine)-ribonucleoside in mRNA + S-adenosyl-L-homocysteine. In terms of biological role, mRNA-capping methyltransferase that methylates the N7 position of the added guanosine to the 5'-cap structure of mRNAs. Binds RNA containing 5'-terminal GpppC. The sequence is that of mRNA cap guanine-N(7) methyltransferase from Drosophila melanogaster (Fruit fly).